The sequence spans 423 residues: Glutamate-1-semialdehyde 2,1-aminomutase (423 aa).

Lys259 bears the N6-(pyridoxal phosphate)lysine mark.

Belongs to the class-III pyridoxal-phosphate-dependent aminotransferase family. HemL subfamily. Pyridoxal 5'-phosphate serves as cofactor.

Its subcellular location is the cytoplasm. The enzyme catalyses (S)-4-amino-5-oxopentanoate = 5-aminolevulinate. The protein operates within porphyrin-containing compound metabolism; protoporphyrin-IX biosynthesis; 5-aminolevulinate from L-glutamyl-tRNA(Glu): step 2/2. This Methanobrevibacter smithii (strain ATCC 35061 / DSM 861 / OCM 144 / PS) protein is Glutamate-1-semialdehyde 2,1-aminomutase.